Here is a 377-residue protein sequence, read N- to C-terminus: Beta sliding clamp (377 aa).

Belongs to the beta sliding clamp family. Forms a ring-shaped head-to-tail homodimer around DNA which binds and tethers DNA polymerases and other proteins to the DNA. The DNA replisome complex has a single clamp-loading complex (3 tau and 1 each of delta, delta', psi and chi subunits) which binds 3 Pol III cores (1 core on the leading strand and 2 on the lagging strand) each with a beta sliding clamp dimer. Additional proteins in the replisome are other copies of gamma, psi and chi, Ssb, DNA helicase and RNA primase.

It localises to the cytoplasm. Functionally, confers DNA tethering and processivity to DNA polymerases and other proteins. Acts as a clamp, forming a ring around DNA (a reaction catalyzed by the clamp-loading complex) which diffuses in an ATP-independent manner freely and bidirectionally along dsDNA. Initially characterized for its ability to contact the catalytic subunit of DNA polymerase III (Pol III), a complex, multichain enzyme responsible for most of the replicative synthesis in bacteria; Pol III exhibits 3'-5' exonuclease proofreading activity. The beta chain is required for initiation of replication as well as for processivity of DNA replication. This chain is Beta sliding clamp (dnaN), found in Staphylococcus aureus (strain COL).